The chain runs to 515 residues: 2-isopropylmalate synthase (515 aa).

Residues 5-267 (VIIFDTTLRD…DTHINTQEIH (263 aa)) enclose the Pyruvate carboxyltransferase domain. Aspartate 14, histidine 202, histidine 204, and asparagine 238 together coordinate Mn(2+). Positions 392-515 (VLDKLSAHST…VADIKNHKHH (124 aa)) are regulatory domain.

This sequence belongs to the alpha-IPM synthase/homocitrate synthase family. LeuA type 1 subfamily. As to quaternary structure, homodimer. Requires Mn(2+) as cofactor.

It is found in the cytoplasm. The enzyme catalyses 3-methyl-2-oxobutanoate + acetyl-CoA + H2O = (2S)-2-isopropylmalate + CoA + H(+). Its pathway is amino-acid biosynthesis; L-leucine biosynthesis; L-leucine from 3-methyl-2-oxobutanoate: step 1/4. Its function is as follows. Catalyzes the condensation of the acetyl group of acetyl-CoA with 3-methyl-2-oxobutanoate (2-ketoisovalerate) to form 3-carboxy-3-hydroxy-4-methylpentanoate (2-isopropylmalate). The sequence is that of 2-isopropylmalate synthase from Haemophilus influenzae (strain ATCC 51907 / DSM 11121 / KW20 / Rd).